Here is an 890-residue protein sequence, read N- to C-terminus: MIAKAVAALLLGSGLASAAGTPLTSKAGDKVPIPDWDLKSSSEVSKDLKGLSKPGVDTSAWYHAGTSKCTLMACLLNAGIYKDEDLWYSDNLNHFNWGQFSIPWLYRHEFALAPAKGKHFILQTNGITSKADLFFNGQQIADSEYQAGAYAGRTYDITSLAAKDNAFVVQVHPTDYLYDFALGYVDWNPYPPDNGTGIWRDITVKETGSVSMGPISVVVDIDVPVESSPAKVTIRAEAQNLENVAVVLDAEAVVSGNSCSGGPLKQTVKLAPGEKKLVEFTKTIAKPKIWWPKQWGDQPLYNAKVTFSVNKAVSDTAQTNFGVRKVTSFVNQYNDTQYSVNGHPFQVVGGGYGADMFLRWDGDRFTRIVEYMLDMHQNTIRLEGKMEHPELYEICDKYGLMVMPGWECCDKWEAWAYNDELAIFPPPVWDDNDYQTANYSMIHEASMLQPHPSVLTFLVGSDFWPNDEAVVLYVNALKNAGWQTPIIASASKRGFPALLGPGGMKMDGPYDWVPPNYWYDTEPSEDRLGAAFGFGSELGAGVGTPELGSLKRFLSQSDLNDLWKNPNKNLYHMSTNVSSFYNRKIYNQGLFKRYGAPTSLDDYLLKAQMMDYEATRAQYEGFSSLWTASRPATGNIYWMLNNAWPSLHWNQFGYYMHPAGSYFGTKVGSRIEHVAYNYQKKEVWVINHSLDQTGPRKVDIELIDTNGKQIAKQSVNINTKANSGFKAADISSQIGKLSSVAFLRLILSDSKGNVLSRNVYWVTNSIDKLDWDSSTWYYTQVTSFVDYTPLNKLSAAQISVTTGSSRRVAGVPGTQTRTVTLENKPSVPAVFIRLTLVDKSGNDVNPVSWTDNYVTLWPKEKLQLEVGGWDASGDSIQVSGRNIAATTVKL.

The signal sequence occupies residues 1–18 (MIAKAVAALLLGSGLASA). Positions 19–26 (AGTPLTSK) are excised as a propeptide. N-linked (GlcNAc...) asparagine glycosylation is found at Asn194, Asn334, and Asn438. Catalysis depends on Asp462, which acts as the Proton donor. Catalysis depends on Glu537, which acts as the Nucleophile. Residues Asn576 and Asn687 are each glycosylated (N-linked (GlcNAc...) asparagine).

This sequence belongs to the glycosyl hydrolase 2 family. In terms of assembly, monomer.

It localises to the secreted. Its subcellular location is the extracellular space. The enzyme catalyses Hydrolysis of chitosan or chitosan oligosaccharides to remove successive D-glucosamine residues from the non-reducing termini.. Functionally, hydrolyzes chitosan and chitooligosaccharides with retention of anomeric configuration. Has no activity against beta-D-galactoside, beta-D-glucuronide, beta-D-mannoside, chitin, glycol chitosan, cellulose, N,N'-diacetylchitibiose and pNP-GlcNAc. This chain is Exo-beta-D-glucosaminidase, found in Hypocrea virens (Gliocladium virens).